The primary structure comprises 233 residues: Zein-alpha PMS2 (233 aa).

A signal peptide spans 1 to 21 (MAAKIFCFLMLLGLSASVATA).

This sequence belongs to the zein family.

In terms of biological role, zeins are major seed storage proteins. The chain is Zein-alpha PMS2 (ZMPMS2) from Zea mays (Maize).